The chain runs to 493 residues: Exosome complex component Rrp41 (493 aa).

Disordered stretches follow at residues 244–264 (VSEETAPEKGAEKEVLEPSPV) and 291–493 (LASE…EKDE). The span at 249–259 (APEKGAEKEVL) shows a compositional bias: basic and acidic residues. Residues 297–377 (PDFEDELEEE…ALEEETELEA (81 aa)) are compositionally biased toward acidic residues. Residues 383 to 400 (PELKEFDEIEARLEKEDA) are compositionally biased toward basic and acidic residues. Over residues 401–471 (SIEAEEEIEP…EAEEEPEEEK (71 aa)) the composition is skewed to acidic residues. Basic and acidic residues predominate over residues 472 to 493 (SEGPWKVVKDPSEAGTRGEKDE).

This sequence belongs to the RNase PH family. Rrp41 subfamily. Component of the archaeal exosome complex. Forms a hexameric ring-like arrangement composed of 3 Rrp41-Rrp42 heterodimers. The hexameric ring associates with a trimer of Rrp4 and/or Csl4 subunits.

It localises to the cytoplasm. Its function is as follows. Catalytic component of the exosome, which is a complex involved in RNA degradation. Has 3'-&gt;5' exoribonuclease activity. Can also synthesize heteromeric RNA-tails. The polypeptide is Exosome complex component Rrp41 (Methanosarcina mazei (strain ATCC BAA-159 / DSM 3647 / Goe1 / Go1 / JCM 11833 / OCM 88) (Methanosarcina frisia)).